A 307-amino-acid polypeptide reads, in one-letter code: sn-1-specific diacylglycerol lipase ABHD11 (307 aa).

A mitochondrion-targeting transit peptide spans 1–34; that stretch reads MLRWARAWRVPRGVLGASSPRRLAVPVTFCSSRS. Lys79 carries the post-translational modification N6-succinyllysine. Residue Ser133 is the Charge relay system of the active site. At Lys196 the chain carries N6-succinyllysine. Active-site charge relay system residues include Asp229 and His288.

This sequence belongs to the AB hydrolase superfamily. Interacts with OGDH and DLST; this interaction maintains the functional lipoylation of the 2-oxoglutarate dehydrogenase complex. In terms of processing, phosphorylated. In terms of tissue distribution, expressed in white adipose tissues.

Its subcellular location is the mitochondrion. It is found in the mitochondrion matrix. It catalyses the reaction 1-octadecanoyl-2-(5Z,8Z,11Z,14Z-eicosatetraenoyl)-sn-glycerol + H2O = 2-(5Z,8Z,11Z,14Z-eicosatetraenoyl)-glycerol + octadecanoate + H(+). It carries out the reaction a 1,2-diacyl-sn-glycerol + H2O = a 2-acylglycerol + a fatty acid + H(+). The catalysed reaction is a 1,3-diacyl-sn-glycerol + H2O = a 1-acyl-sn-glycerol + a fatty acid + H(+). The enzyme catalyses 1-octadecanoyl-2-(9Z-octadecenoyl)-sn-glycerol + H2O = 2-(9Z-octadecenoyl)-glycerol + octadecanoate + H(+). It catalyses the reaction 1-octadecanoyl-2-(4Z,7Z,10Z,13Z,16Z,19Z-docosahexaenoyl)-sn-glycerol + H2O = 2-(4Z,7Z,10Z,13Z,16Z,19Z-docosahexaenoyl)-glycerol + octadecanoate + H(+). It carries out the reaction 1,2-didecanoylglycerol + H2O = decanoylglycerol + decanoate + H(+). Its function is as follows. Catalyzes the hydrolysis of diacylglycerol in vitro and may function as a key regulator in lipid metabolism, namely by regulating the intracellular levels of diacylglycerol. 1,2-diacyl-sn-glycerols are the preferred substrate over 1,3-diacyl-sn-glycerols. The enzyme hydrolyzes stearate in preference to palmitate from the sn-1 position of 1,2-diacyl-sn-glycerols. Maintains the functional lipoylation of the 2-oxoglutarate dehydrogenase complex (OGDHc) through its interaction with the OGDHc by preventing the formation of lipoyl adducts. In addition, is also required for the expansion and differentiation of embryonic stem cells (ESCs). This is sn-1-specific diacylglycerol lipase ABHD11 from Mus musculus (Mouse).